A 123-amino-acid chain; its full sequence is Small ribosomal subunit protein bS18 (123 aa).

Positions 1–10 (MADETTVSTP) are enriched in polar residues. Positions 1 to 52 (MADETTVSTPAASGTETPSTGGGGAPQGRPQGGPRGDRGPRPGGSGRDGGRK) are disordered. Over residues 20-34 (TGGGGAPQGRPQGGP) the composition is skewed to gly residues.

The protein belongs to the bacterial ribosomal protein bS18 family. As to quaternary structure, part of the 30S ribosomal subunit. Forms a tight heterodimer with protein bS6.

In terms of biological role, binds as a heterodimer with protein bS6 to the central domain of the 16S rRNA, where it helps stabilize the platform of the 30S subunit. The chain is Small ribosomal subunit protein bS18 from Koribacter versatilis (strain Ellin345).